The following is a 560-amino-acid chain: Calnexin homolog (560 aa).

An N-terminal signal peptide occupies residues 1–22; it reads MKYGKVSFLALLCSLYVRGSLA. Over 23–489 the chain is Lumenal; sequence DPESEQEPLV…ETIIETPEIG (467 aa). Cys132 and Cys163 are joined by a disulfide. An alpha-D-glucoside-binding residues include Tyr136, Lys138, Tyr154, and Asp161. The interval 242–375 is p domain (Extended arm); it reads IYDPEDIKPA…RKIPNPDYFD (134 aa). 5 repeat units span residues 244–255, 261–272, 280–291, 299–310, and 314–324. 4 X approximate repeats stretches follow at residues 244 to 310 and 314 to 371; these read DPED…DWDD and GDWI…IPNP. The interval 253 to 273 is disordered; the sequence is WVDEPEIPDPNAVKPDDWDED. Cys326 and Cys332 are joined by a disulfide. 3 repeat units span residues 333–343, 347–357, and 361–371. Glu391 contributes to the an alpha-D-glucoside binding site. The N-linked (GlcNAc...) asparagine glycan is linked to Asn418. The chain crosses the membrane as a helical span at residues 490–512; that stretch reads IAIVAVLGSLTAVILTCYFYFFA. Residues 513 to 560 lie on the Cytoplasmic side of the membrane; the sequence is SSSPASLSTGTTEAEKEQQEKFKQETETEKIDVSYAPETESPTAKNED. Residues 517-560 are disordered; it reads ASLSTGTTEAEKEQQEKFKQETETEKIDVSYAPETESPTAKNED. The span at 525–544 shows a compositional bias: basic and acidic residues; that stretch reads EAEKEQQEKFKQETETEKID. Thr551 bears the Phosphothreonine mark. The residue at position 553 (Ser553) is a Phosphoserine. Thr555 is modified (phosphothreonine).

It belongs to the calreticulin family.

It is found in the endoplasmic reticulum membrane. Its function is as follows. Calcium-binding protein that interacts with newly synthesized monoglucosylated glycoproteins in the endoplasmic reticulum. It may act in assisting protein assembly and/or in the retention within the ER of unassembled protein subunits. It seems to play a major role in the quality control apparatus of the ER by the retention of incorrectly folded proteins. This is Calnexin homolog (cal1) from Schizosaccharomyces pombe (strain 972 / ATCC 24843) (Fission yeast).